The following is a 299-amino-acid chain: Probable inactive heme oxygenase 2, chloroplastic (299 aa).

A compositionally biased stretch (low complexity) spans M1 to R15. Disordered stretches follow at residues M1–S20, L45–P70, and D96–W126. Residues M1–V83 constitute a chloroplast transit peptide. Residues C46–A57 show a composition bias toward polar residues. Positions S58–K67 are enriched in basic residues. Residues E105–K122 show a composition bias toward acidic residues.

It belongs to the heme oxygenase family. As to expression, widely expressed at low levels.

It localises to the plastid. The protein resides in the chloroplast. Functionally, probable inactive heme oxygenase. Binds protoporphyrin IX, a precursor for both heme and chlorophyll biosynthesis. Plays a minor role in phytochrome assembly and photomorphogenesis. This is Probable inactive heme oxygenase 2, chloroplastic (HO2) from Arabidopsis thaliana (Mouse-ear cress).